The primary structure comprises 171 residues: Crossover junction endodeoxyribonuclease RuvC (171 aa).

Residues Asp7, Glu66, and Asp138 contribute to the active site. Residues Asp7, Glu66, and Asp138 each contribute to the Mg(2+) site.

This sequence belongs to the RuvC family. In terms of assembly, homodimer which binds Holliday junction (HJ) DNA. The HJ becomes 2-fold symmetrical on binding to RuvC with unstacked arms; it has a different conformation from HJ DNA in complex with RuvA. In the full resolvosome a probable DNA-RuvA(4)-RuvB(12)-RuvC(2) complex forms which resolves the HJ. Mg(2+) is required as a cofactor.

It is found in the cytoplasm. It catalyses the reaction Endonucleolytic cleavage at a junction such as a reciprocal single-stranded crossover between two homologous DNA duplexes (Holliday junction).. The RuvA-RuvB-RuvC complex processes Holliday junction (HJ) DNA during genetic recombination and DNA repair. Endonuclease that resolves HJ intermediates. Cleaves cruciform DNA by making single-stranded nicks across the HJ at symmetrical positions within the homologous arms, yielding a 5'-phosphate and a 3'-hydroxyl group; requires a central core of homology in the junction. The consensus cleavage sequence is 5'-(A/T)TT(C/G)-3'. Cleavage occurs on the 3'-side of the TT dinucleotide at the point of strand exchange. HJ branch migration catalyzed by RuvA-RuvB allows RuvC to scan DNA until it finds its consensus sequence, where it cleaves and resolves the cruciform DNA. This is Crossover junction endodeoxyribonuclease RuvC from Francisella tularensis subsp. mediasiatica (strain FSC147).